The following is a 360-amino-acid chain: MANRTVMVMAAGTGGHIVPGLAVAKELQSRGWKVVWLGTRRGMENKLVPPTGIPLERLNFHGVRGKGLLGSLKGALQLAGAFFSSAAQIFRHRPDVVLGMGGYVCLPGGVMAGLLWKPLVLVNADAGLLLSNKALLPFASKLVCGFDGSAARGPKALVTGNPVRGEIERIAAPAARFAGRSGPLKVLVVGGSLGAKVLNETLPQAMARLPAEQRPQLTHQTGEANFAAVEAAYQAAGLRQQVELLPFVDDMPKRLAECDLVICRAGAITVSELCAAGVPSVLVPLVVSTTSHQRDNAEWMAQAGAAWHLPQKELNADGLAGLLAGLDRDQLLDKAERARALARSGAAGRVADLCQQLAGE.

Residues 13-15 (TGG), arginine 164, serine 192, and glutamine 293 each bind UDP-N-acetyl-alpha-D-glucosamine.

Belongs to the glycosyltransferase 28 family. MurG subfamily.

It localises to the cell inner membrane. It catalyses the reaction di-trans,octa-cis-undecaprenyl diphospho-N-acetyl-alpha-D-muramoyl-L-alanyl-D-glutamyl-meso-2,6-diaminopimeloyl-D-alanyl-D-alanine + UDP-N-acetyl-alpha-D-glucosamine = di-trans,octa-cis-undecaprenyl diphospho-[N-acetyl-alpha-D-glucosaminyl-(1-&gt;4)]-N-acetyl-alpha-D-muramoyl-L-alanyl-D-glutamyl-meso-2,6-diaminopimeloyl-D-alanyl-D-alanine + UDP + H(+). It functions in the pathway cell wall biogenesis; peptidoglycan biosynthesis. Its function is as follows. Cell wall formation. Catalyzes the transfer of a GlcNAc subunit on undecaprenyl-pyrophosphoryl-MurNAc-pentapeptide (lipid intermediate I) to form undecaprenyl-pyrophosphoryl-MurNAc-(pentapeptide)GlcNAc (lipid intermediate II). The polypeptide is UDP-N-acetylglucosamine--N-acetylmuramyl-(pentapeptide) pyrophosphoryl-undecaprenol N-acetylglucosamine transferase (Chromobacterium violaceum (strain ATCC 12472 / DSM 30191 / JCM 1249 / CCUG 213 / NBRC 12614 / NCIMB 9131 / NCTC 9757 / MK)).